The chain runs to 655 residues: MGIFSIANQHIRFAVKLASAIVLTLFVGFHFQLETPRWAVLTAAIVAAGPAFAAGGEPYAGAIRYRGMLRIIGTFIGCIAGLVIIIAMIRAPLLMILVCCIWAGFCTWISSLVRVENSYAWGLAGYTALIIVITIQPEPLLTPQFALERCSEIVVGIVCAIVADLIFSPRSIKQEVDRELDSLLVAQYQLMQLCIKHGEAEEVDKAWGNLVRRTTALEGMRSNLNMESSRWARANRRLKALNTLSLTLITQSCETYLIQNTRPELITETFREFFSTPVETAQDVHKQLKRLRRVIAWTGERETPVTIYSWAGAATRYLLIKRGVISNTKISATEEEILQGEPVVKAESAERHHAMVNFWRTTISCVLGTLFWLWTGWTSGSGAMVMIAVVTSLAMRLPNPRMVGIDFIYGTLAALPLGLLYFLVIIPNTQQSMLLLCLSLAVLGFFLGIEVQKRRLGSMGALASTINIIVLDNPMKFEFSLFLDSALGQIVGCVLAFTVILLVRDKSRDRTGRVLLNQFVSAAISAMTTNVVRRKENHLPALYQQLFLLMNKFPGDLPKFRLALTMIIAHQRLRDAPVPINDDLSAFHRQMRRTADKVISARSDDKRRKYFSQLLEELEIYQEKLRIWHAPPQVTEPVKRLSGMLHKYQHALTSS.

Transmembrane regions (helical) follow at residues 13–33 (FAVKLASAIVLTLFVGFHFQL), 38–58 (WAVLTAAIVAAGPAFAAGGEP), 69–89 (LRIIGTFIGCIAGLVIIIAMI), 93–113 (LLMILVCCIWAGFCTWISSLV), 121–141 (WGLAGYTALIIVITIQPEPLL), 152–172 (EIVVGIVCAIVADLIFSPRSI), 370–390 (LFWLWTGWTSGSGAMVMIAVV), 407–427 (FIYGTLAALPLGLLYFLVIIP), 431–451 (QSMLLLCLSLAVLGFFLGIEV), and 481–501 (LFLDSALGQIVGCVLAFTVIL).

Belongs to the aromatic acid exporter ArAE (TC 2.A.85) family.

The protein resides in the cell inner membrane. Functionally, forms an efflux pump with AaeA. Could function as a metabolic relief valve, allowing to eliminate certain compounds when they accumulate to high levels in the cell. This is p-hydroxybenzoic acid efflux pump subunit AaeB from Escherichia fergusonii (strain ATCC 35469 / DSM 13698 / CCUG 18766 / IAM 14443 / JCM 21226 / LMG 7866 / NBRC 102419 / NCTC 12128 / CDC 0568-73).